The primary structure comprises 367 residues: Phosphoribosylaminoimidazole-succinocarboxamide synthase (367 aa).

This sequence belongs to the SAICAR synthetase family.

It carries out the reaction 5-amino-1-(5-phospho-D-ribosyl)imidazole-4-carboxylate + L-aspartate + ATP = (2S)-2-[5-amino-1-(5-phospho-beta-D-ribosyl)imidazole-4-carboxamido]succinate + ADP + phosphate + 2 H(+). It participates in purine metabolism; IMP biosynthesis via de novo pathway; 5-amino-1-(5-phospho-D-ribosyl)imidazole-4-carboxamide from 5-amino-1-(5-phospho-D-ribosyl)imidazole-4-carboxylate: step 1/2. This is Phosphoribosylaminoimidazole-succinocarboxamide synthase from Saccharophagus degradans (strain 2-40 / ATCC 43961 / DSM 17024).